Here is a 444-residue protein sequence, read N- to C-terminus: Adenylosuccinate synthetase (444 aa).

Residues 13 to 19 (GDEGKGK) and 41 to 43 (GHT) each bind GTP. The Proton acceptor role is filled by Asp-14. Residues Asp-14 and Gly-41 each contribute to the Mg(2+) site. Residues 14-17 (DEGK), 39-42 (NAGH), Thr-129, Arg-143, Gln-224, Thr-239, and Arg-303 contribute to the IMP site. Residue His-42 is the Proton donor of the active site. Residue 299–305 (TTTGRRR) coordinates substrate. Residues Arg-305, 331-333 (KLD), and 413-415 (SLG) contribute to the GTP site.

The protein belongs to the adenylosuccinate synthetase family. As to quaternary structure, homodimer. It depends on Mg(2+) as a cofactor.

The protein resides in the cytoplasm. It carries out the reaction IMP + L-aspartate + GTP = N(6)-(1,2-dicarboxyethyl)-AMP + GDP + phosphate + 2 H(+). Its pathway is purine metabolism; AMP biosynthesis via de novo pathway; AMP from IMP: step 1/2. Its function is as follows. Plays an important role in the de novo pathway of purine nucleotide biosynthesis. Catalyzes the first committed step in the biosynthesis of AMP from IMP. The chain is Adenylosuccinate synthetase from Synechocystis sp. (strain ATCC 27184 / PCC 6803 / Kazusa).